The primary structure comprises 269 residues: 1-(5-phosphoribosyl)-5-[(5-phosphoribosylamino)methylideneamino] imidazole-4-carboxamide isomerase (269 aa).

The active-site Proton acceptor is Asp10. The active-site Proton donor is Asp132.

The protein belongs to the HisA/HisF family.

It is found in the cytoplasm. The enzyme catalyses 1-(5-phospho-beta-D-ribosyl)-5-[(5-phospho-beta-D-ribosylamino)methylideneamino]imidazole-4-carboxamide = 5-[(5-phospho-1-deoxy-D-ribulos-1-ylimino)methylamino]-1-(5-phospho-beta-D-ribosyl)imidazole-4-carboxamide. It functions in the pathway amino-acid biosynthesis; L-histidine biosynthesis; L-histidine from 5-phospho-alpha-D-ribose 1-diphosphate: step 4/9. The protein is 1-(5-phosphoribosyl)-5-[(5-phosphoribosylamino)methylideneamino] imidazole-4-carboxamide isomerase of Xylella fastidiosa (strain M12).